Consider the following 780-residue polypeptide: Replication origin-binding protein (780 aa).

In terms of domain architecture, Helicase ATP-binding spans 39–195 (SFENVRQPIK…AAFKPDTQIA (157 aa)). 52 to 59 (AAMGSGKT) serves as a coordination point for ATP.

This sequence belongs to the herpesviridae OriBP family.

Its function is as follows. Probably involved in DNA replication. Binds the origin of replication (ori). This is Replication origin-binding protein (U73) from Human herpesvirus 6A (strain Uganda-1102) (HHV-6 variant A).